Here is a 352-residue protein sequence, read N- to C-terminus: Small ribosomal subunit biogenesis GTPase RsgA 2 (352 aa).

Residues 100–257 (RQDGQIIATN…VIDTPGMREL (158 aa)) enclose the CP-type G domain. GTP-binding positions include 147 to 150 (TKAD) and 199 to 207 (GSSGVGKST). 4 residues coordinate Zn(2+): C278, C283, H285, and C291.

The protein belongs to the TRAFAC class YlqF/YawG GTPase family. RsgA subfamily. In terms of assembly, monomer. Associates with 30S ribosomal subunit, binds 16S rRNA. It depends on Zn(2+) as a cofactor.

Its subcellular location is the cytoplasm. In terms of biological role, one of several proteins that assist in the late maturation steps of the functional core of the 30S ribosomal subunit. Helps release RbfA from mature subunits. May play a role in the assembly of ribosomal proteins into the subunit. Circularly permuted GTPase that catalyzes slow GTP hydrolysis, GTPase activity is stimulated by the 30S ribosomal subunit. This is Small ribosomal subunit biogenesis GTPase RsgA 2 from Lactiplantibacillus plantarum (strain ATCC BAA-793 / NCIMB 8826 / WCFS1) (Lactobacillus plantarum).